We begin with the raw amino-acid sequence, 84 residues long: Small ribosomal subunit protein uS17 (84 aa).

This sequence belongs to the universal ribosomal protein uS17 family. In terms of assembly, part of the 30S ribosomal subunit.

Its function is as follows. One of the primary rRNA binding proteins, it binds specifically to the 5'-end of 16S ribosomal RNA. This is Small ribosomal subunit protein uS17 from Clostridium botulinum (strain 657 / Type Ba4).